A 78-amino-acid polypeptide reads, in one-letter code: Acyl carrier protein (78 aa).

The Carrier domain occupies 2 to 77; sequence SNFEERVKKI…AAIDYVVSSA (76 aa). Position 37 is an O-(pantetheine 4'-phosphoryl)serine (serine 37).

Belongs to the acyl carrier protein (ACP) family. Post-translationally, 4'-phosphopantetheine is transferred from CoA to a specific serine of apo-ACP by AcpS. This modification is essential for activity because fatty acids are bound in thioester linkage to the sulfhydryl of the prosthetic group.

Its subcellular location is the cytoplasm. Its pathway is lipid metabolism; fatty acid biosynthesis. Functionally, carrier of the growing fatty acid chain in fatty acid biosynthesis. Is probably involved in the biosynthesis of docosahexaenoic acid (DHA) which is produced by this bacterium as a fatty acyl component in its membrane lipid. The polypeptide is Acyl carrier protein (Moritella marina (Vibrio marinus)).